A 161-amino-acid chain; its full sequence is Allophycocyanin alpha chain (161 aa).

Asparagine 71 bears the N4-methylasparagine mark. Residue cysteine 81 coordinates (2R,3E)-phycocyanobilin.

Belongs to the phycobiliprotein family. As to quaternary structure, heterodimer of an alpha and a beta chain. Post-translationally, contains one covalently linked phycocyanobilin chromophore.

It localises to the plastid. The protein resides in the chloroplast thylakoid membrane. Functionally, light-harvesting photosynthetic bile pigment-protein from the phycobiliprotein complex. Allophycocyanin has a maximum absorption at approximately 650 nanometers. This Porphyra purpurea (Red seaweed) protein is Allophycocyanin alpha chain (apcA).